Here is a 76-residue protein sequence, read N- to C-terminus: UPF0154 protein LCA_1273 (76 aa).

The chain crosses the membrane as a helical span at residues 3–23 (IGIGVLIFVIGALLGAVAGFF). A disordered region spans residues 55-76 (PSEKKLNQMMSSMKAQQKRSKK).

It belongs to the UPF0154 family.

The protein localises to the cell membrane. The protein is UPF0154 protein LCA_1273 of Latilactobacillus sakei subsp. sakei (strain 23K) (Lactobacillus sakei subsp. sakei).